Reading from the N-terminus, the 587-residue chain is Arginine--tRNA ligase (587 aa).

The 'HIGH' region signature appears at 123–133; sequence ANVAKPLHVGH.

It belongs to the class-I aminoacyl-tRNA synthetase family. Monomer.

It localises to the cytoplasm. It catalyses the reaction tRNA(Arg) + L-arginine + ATP = L-arginyl-tRNA(Arg) + AMP + diphosphate. In Alkaliphilus oremlandii (strain OhILAs) (Clostridium oremlandii (strain OhILAs)), this protein is Arginine--tRNA ligase.